Here is a 267-residue protein sequence, read N- to C-terminus: Trehalose-phosphate phosphatase (267 aa).

Residue aspartate 20 is the Nucleophile of the active site. Aspartate 20, aspartate 22, and aspartate 198 together coordinate Mg(2+). 20–22 (DLD) is a binding site for substrate.

The protein belongs to the trehalose phosphatase family. The cofactor is Mg(2+).

The catalysed reaction is alpha,alpha-trehalose 6-phosphate + H2O = alpha,alpha-trehalose + phosphate. Its pathway is glycan biosynthesis; trehalose biosynthesis. Functionally, removes the phosphate from trehalose 6-phosphate to produce free trehalose. The sequence is that of Trehalose-phosphate phosphatase (otsB) from Salmonella typhimurium (strain SL1344).